The primary structure comprises 347 residues: Putative GDP-L-fucose synthase 2 (347 aa).

The interval 1–20 (MPSQQRSSSGSTAKAGDADG) is disordered. Position 41 to 47 (41 to 47 (GHRGMVG)) interacts with NADP(+). Residue tyrosine 168 is the Proton donor/acceptor of the active site. NADP(+)-binding positions include lysine 172, 195 to 198 (PNNL), and histidine 211. Substrate contacts are provided by arginine 219, tryptophan 234, arginine 241, and glutamate 301.

Belongs to the NAD(P)-dependent epimerase/dehydratase family. Fucose synthase subfamily. Homodimer.

It carries out the reaction GDP-beta-L-fucose + NADP(+) = GDP-4-dehydro-alpha-D-rhamnose + NADPH + H(+). It participates in nucleotide-sugar biosynthesis; GDP-L-fucose biosynthesis via de novo pathway; GDP-L-fucose from GDP-alpha-D-mannose: step 2/2. Functionally, catalyzes the two-step NADP-dependent conversion of GDP-4-dehydro-6-deoxy-D-mannose to GDP-fucose, involving an epimerase and a reductase reaction. This is Putative GDP-L-fucose synthase 2 from Oryza sativa subsp. japonica (Rice).